A 359-amino-acid polypeptide reads, in one-letter code: Phosphate acyltransferase (359 aa).

It belongs to the PlsX family. In terms of assembly, homodimer. Probably interacts with PlsY.

Its subcellular location is the cytoplasm. The catalysed reaction is a fatty acyl-[ACP] + phosphate = an acyl phosphate + holo-[ACP]. Its pathway is lipid metabolism; phospholipid metabolism. Its function is as follows. Catalyzes the reversible formation of acyl-phosphate (acyl-PO(4)) from acyl-[acyl-carrier-protein] (acyl-ACP). This enzyme utilizes acyl-ACP as fatty acyl donor, but not acyl-CoA. This is Phosphate acyltransferase from Koribacter versatilis (strain Ellin345).